We begin with the raw amino-acid sequence, 184 residues long: Acetyl-CoA decarbonylase/synthase complex subunit epsilon 1 (184 aa).

Belongs to the CdhB family. As to quaternary structure, heterotetramer of two alpha and two epsilon subunits. The ACDS complex is made up of alpha, epsilon, beta, gamma and delta subunits with a probable stoichiometry of (alpha(2)epsilon(2))(4)-beta(8)-(gamma(1)delta(1))(8).

In terms of biological role, part of a complex that catalyzes the reversible cleavage of acetyl-CoA, allowing autotrophic growth from CO(2). The alpha-epsilon subcomponent functions as a carbon monoxide dehydrogenase. The precise role of the epsilon subunit is unclear; it may have a stabilizing role within the alpha(2)epsilon(2) component and/or be involved in electron transfer to FAD during a potential FAD-mediated CO oxidation. This is Acetyl-CoA decarbonylase/synthase complex subunit epsilon 1 (cdhB1) from Archaeoglobus fulgidus (strain ATCC 49558 / DSM 4304 / JCM 9628 / NBRC 100126 / VC-16).